Here is a 267-residue protein sequence, read N- to C-terminus: Transcription factor Spi-B (267 aa).

The TAD1 (Acidic) stretch occupies residues 1 to 31; it reads MLALEAAQLDGPHLSCLYPEGVFYDLDSCKP. The interval 41 to 62 is TAD2; it reads LDSTWGWTEAPPAPAIAPYEAF. A DNA-binding region (ETS) is located at residues 174–257; the sequence is LRLYQFLLGL…VKRKLTYQFD (84 aa).

Belongs to the ETS family. In terms of assembly, can form homotypic interactions. Interacts with IRF4/Pip. Interacts with JUN. Interacts with TBP. May also interact with CREBBP and EP300. Interacts with NONO/p54(nrb). Expressed in the medulla of the thymus, the spleen and germinal centers of the lymph nodes. Expressed in B-cells and T-cells, expression increases during B-cell maturation and decreases during T-cell maturation.

It is found in the nucleus. Functionally, sequence specific transcriptional activator which binds to the PU-box, a purine-rich DNA sequence (5'-GAGGAA-3') that can act as a lymphoid-specific enhancer. Promotes development of plasmacytoid dendritic cells (pDCs), also known as type 2 DC precursors (pre-DC2) or natural interferon (IFN)-producing cells. These cells have the capacity to produce large amounts of interferon and block viral replication. Required for B-cell receptor (BCR) signaling, which is necessary for normal B-cell development and antigenic stimulation. This is Transcription factor Spi-B (Spib) from Mus musculus (Mouse).